The following is a 225-amino-acid chain: Ribosome maturation factor RimM (225 aa).

Residues 144–225 (ADEFYWVDLI…RIVVDWEADY (82 aa)) form the PRC barrel domain.

It belongs to the RimM family. As to quaternary structure, binds ribosomal protein uS19.

The protein resides in the cytoplasm. In terms of biological role, an accessory protein needed during the final step in the assembly of 30S ribosomal subunit, possibly for assembly of the head region. Essential for efficient processing of 16S rRNA. May be needed both before and after RbfA during the maturation of 16S rRNA. It has affinity for free ribosomal 30S subunits but not for 70S ribosomes. In Burkholderia vietnamiensis (strain G4 / LMG 22486) (Burkholderia cepacia (strain R1808)), this protein is Ribosome maturation factor RimM.